The chain runs to 562 residues: NAD-dependent histone deacetylase SIR2 (562 aa).

Residues methionine 1–glycine 67 are disordered. Positions serine 11–threonine 25 are enriched in polar residues. A compositionally biased stretch (basic and acidic residues) spans glutamine 26 to aspartate 36. The Deacetylase sirtuin-type domain occupies arginine 237 to threonine 527. NAD(+) is bound by residues glycine 262–tyrosine 281 and glutamine 344–aspartate 347. The Proton acceptor role is filled by histidine 364. Residues cysteine 372, cysteine 375, cysteine 396, and cysteine 399 each contribute to the Zn(2+) site. NAD(+) is bound by residues glycine 471–serine 473, asparagine 496–aspartate 498, and cysteine 513.

It belongs to the sirtuin family. Class I subfamily. Homomultimer. Forms a complex with SIR3 and SIR4. Component of the RENT complex, at least composed of SIR2, CDC14 and NET1. The RENT complex interacts with FOB1. Interacts with ESC8. Interacts with and ZDS2. Interacts with MCM10. Interacts with SLX5. Interacts with NSI1. Requires Zn(2+) as cofactor.

It localises to the nucleus. It is found in the nucleolus. The catalysed reaction is N(6)-acetyl-L-lysyl-[protein] + NAD(+) + H2O = 2''-O-acetyl-ADP-D-ribose + nicotinamide + L-lysyl-[protein]. With respect to regulation, its activity is increased by calorie restriction, which slows the pace of aging and increases maximum lifespan. Activated by resveratrol (3,5,4'-trihydroxy-trans-stilbene), which is found in red wine. Its function is as follows. NAD-dependent deacetylase, which participates in a wide range of cellular events including chromosome silencing, chromosome segregation, DNA recombination and the determination of life span. Involved in transcriptional repression of the silent mating-type loci HML and HMR and telomeric silencing via its association with SIR3 and SIR4. Plays a central role in ribosomal DNA (rDNA) silencing via its association with the RENT complex, preventing hyperrecombination, and repressing transcription from foreign promoters, which contributes to extending life span. Probably represses transcription via the formation of heterochromatin structure, which involves the compaction of chromatin fiber into a more condensed form, although this complex in at least one case can still bind euchromatic levels of positive transcription regulators. Although it displays some NAD-dependent histone deacetylase activity on histone H3K9Ac and H3K14Ac and histone H4K16Ac in vitro, such activity is unclear in vivo and may not be essential. The sequence is that of NAD-dependent histone deacetylase SIR2 (SIR2) from Saccharomyces cerevisiae (strain ATCC 204508 / S288c) (Baker's yeast).